The sequence spans 349 residues: Phosphoribosylformylglycinamidine cyclo-ligase (349 aa).

Belongs to the AIR synthase family.

Its subcellular location is the cytoplasm. The catalysed reaction is 2-formamido-N(1)-(5-O-phospho-beta-D-ribosyl)acetamidine + ATP = 5-amino-1-(5-phospho-beta-D-ribosyl)imidazole + ADP + phosphate + H(+). Its pathway is purine metabolism; IMP biosynthesis via de novo pathway; 5-amino-1-(5-phospho-D-ribosyl)imidazole from N(2)-formyl-N(1)-(5-phospho-D-ribosyl)glycinamide: step 2/2. This Jannaschia sp. (strain CCS1) protein is Phosphoribosylformylglycinamidine cyclo-ligase.